Here is a 221-residue protein sequence, read N- to C-terminus: UPF0502 protein PLES_16071 (221 aa).

The protein belongs to the UPF0502 family.

This Pseudomonas aeruginosa (strain LESB58) protein is UPF0502 protein PLES_16071.